A 144-amino-acid polypeptide reads, in one-letter code: Histone H2B.2, sperm (144 aa).

The disordered stretch occupies residues 1–51 (MPRSPAKTSPRKGSPRKGSPSRKASPKRGGKGAKRAGKGGRRRRVVKRRRR). Short sequence motifs (SPKK motif) lie at residues 4 to 7 (SPAK), 9 to 12 (SPRK), 14 to 17 (SPRK), 19 to 22 (SPSR), and 25 to 28 (SPKR). Phosphoserine occurs at positions 14, 19, and 25. A compositionally biased stretch (basic residues) spans 24–51 (ASPKRGGKGAKRAGKGGRRRRVVKRRRR). The O-linked (GlcNAc) serine glycan is linked to S131. K139 is covalently cross-linked (Glycyl lysine isopeptide (Lys-Gly) (interchain with G-Cter in ubiquitin)).

It belongs to the histone H2B family. In terms of assembly, the nucleosome is a histone octamer containing two molecules each of H2A, H2B, H3 and H4 assembled in one H3-H4 heterotetramer and two H2A-H2B heterodimers. The octamer wraps approximately 147 bp of DNA. Post-translationally, monoubiquitination of Lys-139 gives a specific tag for epigenetic transcriptional activation and is also prerequisite for histone H3 'Lys-4' and 'Lys-79' methylation. Phosphorylated on SPKK motifs 3, 4 and 5; which may regulate DNA binding. Dephosphorylated during maturation of spermatids to mature sperm and rephosphorylated at fertilization.

The protein resides in the nucleus. The protein localises to the chromosome. Functionally, core component of nucleosome. Nucleosomes wrap and compact DNA into chromatin, limiting DNA accessibility to the cellular machineries which require DNA as a template. Histones thereby play a central role in transcription regulation, DNA repair, DNA replication and chromosomal stability. DNA accessibility is regulated via a complex set of post-translational modifications of histones, also called histone code, and nucleosome remodeling. This chain is Histone H2B.2, sperm, found in Parechinus angulosus (Angulate sea urchin).